A 466-amino-acid polypeptide reads, in one-letter code: Myocardial zonula adherens protein (466 aa).

The segment covering 1 to 10 (MLRSTSTVTL) has biased composition (polar residues). Residues 1–20 (MLRSTSTVTLLSGGAARTPG) form the signal peptide. The interval 1–23 (MLRSTSTVTLLSGGAARTPGAPS) is disordered. Coiled coils occupy residues 96-142 (QLKE…SHAQ) and 174-418 (LQKT…TQAK). Positions 424–425 (RE) match the Required for DYNLL1-binding motif.

The protein belongs to the MYZAP family. As to quaternary structure, interacts with DSP, MPRIP and TJP1/ZO1. Interaction with MPRIP inhibits the activation of transcription factor SRF. Interacts with GRIN1. Interacts with DYNLL1. Detected in heart, liver, skeletal muscle, placenta, small intestine, lung, prostate and testis. Expressed in arrector pili muscle (at protein level).

The protein resides in the cytoplasm. The protein localises to the cytoskeleton. It localises to the cell membrane. It is found in the myofibril. Its subcellular location is the sarcomere. The protein resides in the i band. The protein localises to the z line. It localises to the cell junction. Plays a role in cellular signaling via Rho-related GTP-binding proteins and subsequent activation of transcription factor SRF. Targets TJP1 to cell junctions. In cortical neurons, may play a role in glutaminergic signal transduction through interaction with the NMDA receptor subunit GRIN1. The sequence is that of Myocardial zonula adherens protein (MYZAP) from Homo sapiens (Human).